The chain runs to 828 residues: Periplasmic nitrate reductase (828 aa).

Residues 1 to 31 (MKLSRRSFMKANAVAAAAAAAGLSVPGVARA) constitute a signal peptide (tat-type signal). The 4Fe-4S Mo/W bis-MGD-type domain occupies 39–95 (IKWDKAPCRFCGTGCGVLVGTQQGRVVACQGDPDAPVNRGLNCIKGYFLPKIMYGKD). [4Fe-4S] cluster-binding residues include Cys-46, Cys-49, Cys-53, and Cys-81. Residues Lys-83, Gln-150, Asn-175, Cys-179, 212 to 219 (WGANMAEM), 243 to 247 (STYQH), 262 to 264 (QSD), Met-372, Gln-376, Asn-482, 508 to 509 (SD), Lys-531, Asp-558, and 718 to 727 (TGRVLEHWHT) each bind Mo-bis(molybdopterin guanine dinucleotide). Phe-794 serves as a coordination point for substrate. Mo-bis(molybdopterin guanine dinucleotide)-binding residues include Asn-802 and Lys-819.

It belongs to the prokaryotic molybdopterin-containing oxidoreductase family. NasA/NapA/NarB subfamily. Component of the periplasmic nitrate reductase NapAB complex composed of NapA and NapB. [4Fe-4S] cluster serves as cofactor. Requires Mo-bis(molybdopterin guanine dinucleotide) as cofactor. Predicted to be exported by the Tat system. The position of the signal peptide cleavage has not been experimentally proven.

The protein resides in the periplasm. It carries out the reaction 2 Fe(II)-[cytochrome] + nitrate + 2 H(+) = 2 Fe(III)-[cytochrome] + nitrite + H2O. Functionally, catalytic subunit of the periplasmic nitrate reductase complex NapAB. Receives electrons from NapB and catalyzes the reduction of nitrate to nitrite. This Escherichia coli O8 (strain IAI1) protein is Periplasmic nitrate reductase.